The chain runs to 399 residues: Acetate kinase (399 aa).

Asn9 is a Mg(2+) binding site. Lys16 contacts ATP. A substrate-binding site is contributed by Arg90. The active-site Proton donor/acceptor is the Asp147. ATP is bound by residues 207–211 (HIGNG), 282–284 (DLR), and 330–334 (GVGEN). Glu384 provides a ligand contact to Mg(2+).

Belongs to the acetokinase family. Homodimer. Mg(2+) is required as a cofactor. Requires Mn(2+) as cofactor.

It is found in the cytoplasm. The catalysed reaction is acetate + ATP = acetyl phosphate + ADP. It functions in the pathway metabolic intermediate biosynthesis; acetyl-CoA biosynthesis; acetyl-CoA from acetate: step 1/2. Catalyzes the formation of acetyl phosphate from acetate and ATP. Can also catalyze the reverse reaction. The polypeptide is Acetate kinase (Staphylococcus saprophyticus subsp. saprophyticus (strain ATCC 15305 / DSM 20229 / NCIMB 8711 / NCTC 7292 / S-41)).